Here is a 268-residue protein sequence, read N- to C-terminus: L-proline trans-4-hydroxylase (268 aa).

Residues histidine 113, aspartate 115, and histidine 218 each contribute to the Fe cation site.

This sequence belongs to the PhyH family. In terms of assembly, monomer. The cofactor is Fe(2+).

The enzyme catalyses L-proline + 2-oxoglutarate + O2 = trans-4-hydroxy-L-proline + succinate + CO2. Its pathway is antibiotic biosynthesis. Competitively inhibited by pyridine-2,4-dicarboxylate. Inhibited by diethyl pyrocarbonate (DEPC), 3,4-dihydroxybenzoate, pyridine-2,5-dicarboxylate, alpha,alpha'-dipyridyl, and some metal ions such as Co(2+) and Zn(2+). Its function is as follows. Involved in the biosynthesis of the peptidolactone antibiotic etamycin (viridogrisein). Catalyzes the hydroxylation of free L-proline at the C-4 position to yield trans-4-hydroxy-L-proline. This chain is L-proline trans-4-hydroxylase, found in Streptomyces griseoviridis.